Reading from the N-terminus, the 258-residue chain is UPF0246 protein YPK_3600 (258 aa).

The protein belongs to the UPF0246 family.

The sequence is that of UPF0246 protein YPK_3600 from Yersinia pseudotuberculosis serotype O:3 (strain YPIII).